The sequence spans 421 residues: Alpha-tubulin N-acetyltransferase 1 (421 aa).

The 190-residue stretch at 1-190 folds into the N-acetyltransferase domain; it reads MEFPFDVDAL…NNFVIFEGFF (190 aa). Residue lysine 56 is modified to N6-acetyllysine; by autocatalysis. Acetyl-CoA is bound at residue 124–137; it reads FYIHESVQRHGHGR. Lysine 146 carries the N6-acetyllysine; by autocatalysis modification. 160–169 is a binding site for acetyl-CoA; it reads SPKLLKFLNK. Positions 214-235 are disordered; that stretch reads PIPAAPARKLPPKRAEGDIKPY. Residues 226–235 show a composition bias toward basic and acidic residues; that stretch reads KRAEGDIKPY. Lysine 233 and lysine 244 each carry N6-acetyllysine; by autocatalysis. A disordered region spans residues 252-284; sequence PLNRAPRRATPPAHPPPRSSSLGNSPDRGPLRP. Serine 272 and serine 276 each carry phosphoserine. Arginine 305 is subject to Asymmetric dimethylarginine. Serine 315 is subject to Phosphoserine. At arginine 323 the chain carries Omega-N-methylarginine. Residues 342–351 are compositionally biased toward polar residues; sequence FNTSFLGTGN. The tract at residues 342-398 is disordered; the sequence is FNTSFLGTGNQERKQGEQEAEDRSASEDQVLLQDGSGEEPTHTVAPRAQAPPAQSWM. The span at 352–367 shows a compositional bias: basic and acidic residues; that stretch reads QERKQGEQEAEDRSAS.

This sequence belongs to the acetyltransferase ATAT1 family. Component of the BBSome complex. Interacts with AP2 alpha-adaptins, including AP2A2, but not with AP1 gamma-adaptin (AP1G1/AP1G2); this interaction is required for efficient alpha-tubulin acetylation, hence clathrin-coated pits are sites of microtubule acetylation. In terms of processing, autoacetylation strongly increases tubulin acetylation.

The protein resides in the cytoplasm. The protein localises to the membrane. It localises to the clathrin-coated pit. It is found in the cell junction. Its subcellular location is the focal adhesion. The protein resides in the cell projection. The protein localises to the axon. It localises to the cytoskeleton. It is found in the spindle. It carries out the reaction L-lysyl-[alpha-tubulin] + acetyl-CoA = N(6)-acetyl-L-lysyl-[alpha-tubulin] + CoA + H(+). Specifically acetylates 'Lys-40' in alpha-tubulin on the lumenal side of microtubules. Promotes microtubule destabilization and accelerates microtubule dynamics; this activity may be independent of acetylation activity. Acetylates alpha-tubulin with a slow enzymatic rate, due to a catalytic site that is not optimized for acetyl transfer. Enters the microtubule through each end and diffuses quickly throughout the lumen of microtubules. Acetylates only long/old microtubules because of its slow acetylation rate since it does not have time to act on dynamically unstable microtubules before the enzyme is released. Required for normal sperm flagellar function. Promotes directional cell locomotion and chemotaxis, through AP2A2-dependent acetylation of alpha-tubulin at clathrin-coated pits that are concentrated at the leading edge of migrating cells. May facilitate primary cilium assembly. This chain is Alpha-tubulin N-acetyltransferase 1, found in Rattus norvegicus (Rat).